The primary structure comprises 171 residues: Inosine/xanthosine triphosphatase (171 aa).

8–13 (TTNPAK) contributes to the substrate binding site. D38 and Q68 together coordinate Mg(2+).

This sequence belongs to the YjjX NTPase family. Homodimer. Mg(2+) is required as a cofactor. Mn(2+) serves as cofactor.

The catalysed reaction is XTP + H2O = XDP + phosphate + H(+). It catalyses the reaction ITP + H2O = IDP + phosphate + H(+). In terms of biological role, phosphatase that hydrolyzes non-canonical purine nucleotides such as XTP and ITP to their respective diphosphate derivatives. Probably excludes non-canonical purines from DNA/RNA precursor pool, thus preventing their incorporation into DNA/RNA and avoiding chromosomal lesions. This is Inosine/xanthosine triphosphatase from Cronobacter sakazakii (strain ATCC BAA-894) (Enterobacter sakazakii).